The primary structure comprises 201 residues: Ras-related protein Rab-1B (201 aa).

Residue Met1 is modified to N-acetylmethionine. Residues Ser17, Gly18, Val19, Gly20, Lys21, Ser22, Cys23, Tyr33, Thr34, Glu35, Ser36, Ser39, and Thr40 each coordinate GTP. A Mg(2+)-binding site is contributed by Ser22. Positions 30 to 45 match the Switch 1 motif; it reads DDTYTESYISTIGVDF. Residues Thr40 and Asp63 each contribute to the Mg(2+) site. The segment at 64-83 is switch 2 region; required for interaction with REP1/CHM; it reads TAGQERFRTVTSSYYRGAHG. A Switch 2 motif is present at residues 65 to 80; that stretch reads AGQERFRTVTSSYYRG. Positions 66, 121, 122, 124, 151, 152, and 153 each coordinate GTP. Residues 173–201 form a disordered region; it reads MGPGAASGGERPNLKIDSTPVKSASGGCC. Residues Cys200 and Cys201 are each lipidated (S-geranylgeranyl cysteine). Cys201 is subject to Cysteine methyl ester.

Belongs to the small GTPase superfamily. Rab family. As to quaternary structure, interacts with MICAL1 and MICAL2. Interacts (in GTP-bound form) with MICALCL, MICAL1 and MILCAL3. Interacts with GDI1; the interaction requires the GDP-bound state. Interacts with CHM/REP1; the interaction requires the GDP-bound form and is necessary for prenylation by GGTase II. Interacts with RabGAP TBC1D20. Interacts (in GDP-bound form) with lipid phosphatase MTMR6 (via GRAM domain); the interaction regulates MTMR6 recruitment to the endoplasmic reticulum-Golgi intermediate compartment. Interacts (in GDP-bound form) with lipid phosphatase MTMR7. Requires Mg(2+) as cofactor. In terms of processing, prenylated; by GGTase II, only after interaction of the substrate with Rab escort protein 1 (REP1).

The protein localises to the cytoplasm. It localises to the membrane. The protein resides in the preautophagosomal structure membrane. Its subcellular location is the perinuclear region. It catalyses the reaction GTP + H2O = GDP + phosphate + H(+). Its activity is regulated as follows. Regulated by guanine nucleotide exchange factors (GEFs) which promote the exchange of bound GDP for free GTP. Regulated by GTPase activating proteins (GAPs) including TBC1D20 which increases the GTP hydrolysis activity. Inhibited by GDP dissociation inhibitors (GDIs). Its function is as follows. The small GTPases Rab are key regulators of intracellular membrane trafficking, from the formation of transport vesicles to their fusion with membranes. Rabs cycle between an inactive GDP-bound form and an active GTP-bound form that is able to recruit to membranes different set of downstream effectors directly responsible for vesicle formation, movement, tethering and fusion. Plays a role in the initial events of the autophagic vacuole development which take place at specialized regions of the endoplasmic reticulum. Regulates vesicular transport between the endoplasmic reticulum and successive Golgi compartments. Required to modulate the compacted morphology of the Golgi. Promotes the recruitment of lipid phosphatase MTMR6 to the endoplasmic reticulum-Golgi intermediate compartment. The polypeptide is Ras-related protein Rab-1B (Rab1b) (Rattus norvegicus (Rat)).